Consider the following 330-residue polypeptide: Ketol-acid reductoisomerase (NADP(+)) (330 aa).

The 181-residue stretch at 1–181 folds into the KARI N-terminal Rossmann domain; it reads MNIYYEQDAD…GGTKAGVIET (181 aa). Residues 24–27, Lys47, Ser50, Ser52, and 82–85 contribute to the NADP(+) site; these read YGSQ and DQTQ. Residue His107 is part of the active site. Gly133 lines the NADP(+) pocket. Residues 182 to 327 enclose the KARI C-terminal knotted domain; that stretch reads SFKDETETDL…AKLRGMMSWL (146 aa). Asp190, Glu194, Glu226, and Glu230 together coordinate Mg(2+). Ser251 provides a ligand contact to substrate.

The protein belongs to the ketol-acid reductoisomerase family. It depends on Mg(2+) as a cofactor.

It catalyses the reaction (2R)-2,3-dihydroxy-3-methylbutanoate + NADP(+) = (2S)-2-acetolactate + NADPH + H(+). The catalysed reaction is (2R,3R)-2,3-dihydroxy-3-methylpentanoate + NADP(+) = (S)-2-ethyl-2-hydroxy-3-oxobutanoate + NADPH + H(+). The protein operates within amino-acid biosynthesis; L-isoleucine biosynthesis; L-isoleucine from 2-oxobutanoate: step 2/4. Its pathway is amino-acid biosynthesis; L-valine biosynthesis; L-valine from pyruvate: step 2/4. In terms of biological role, involved in the biosynthesis of branched-chain amino acids (BCAA). Catalyzes an alkyl-migration followed by a ketol-acid reduction of (S)-2-acetolactate (S2AL) to yield (R)-2,3-dihydroxy-isovalerate. In the isomerase reaction, S2AL is rearranged via a Mg-dependent methyl migration to produce 3-hydroxy-3-methyl-2-ketobutyrate (HMKB). In the reductase reaction, this 2-ketoacid undergoes a metal-dependent reduction by NADPH to yield (R)-2,3-dihydroxy-isovalerate. The protein is Ketol-acid reductoisomerase (NADP(+)) of Chlorobaculum tepidum (strain ATCC 49652 / DSM 12025 / NBRC 103806 / TLS) (Chlorobium tepidum).